We begin with the raw amino-acid sequence, 367 residues long: Flagellar P-ring protein (367 aa).

The signal sequence occupies residues 1–22 (MRRMLVIRWILAIHLIATQVFA).

It belongs to the FlgI family. The basal body constitutes a major portion of the flagellar organelle and consists of four rings (L,P,S, and M) mounted on a central rod.

It is found in the periplasm. It localises to the bacterial flagellum basal body. Functionally, assembles around the rod to form the L-ring and probably protects the motor/basal body from shearing forces during rotation. This chain is Flagellar P-ring protein, found in Legionella pneumophila subsp. pneumophila (strain Philadelphia 1 / ATCC 33152 / DSM 7513).